The primary structure comprises 182 residues: Large ribosomal subunit protein uL5 (182 aa).

Belongs to the universal ribosomal protein uL5 family. As to quaternary structure, part of the 50S ribosomal subunit; part of the 5S rRNA/L5/L18/L25 subcomplex. Contacts the 5S rRNA and the P site tRNA. Forms a bridge to the 30S subunit in the 70S ribosome.

Its function is as follows. This is one of the proteins that bind and probably mediate the attachment of the 5S RNA into the large ribosomal subunit, where it forms part of the central protuberance. In the 70S ribosome it contacts protein S13 of the 30S subunit (bridge B1b), connecting the 2 subunits; this bridge is implicated in subunit movement. Contacts the P site tRNA; the 5S rRNA and some of its associated proteins might help stabilize positioning of ribosome-bound tRNAs. This Nostoc sp. (strain PCC 7120 / SAG 25.82 / UTEX 2576) protein is Large ribosomal subunit protein uL5.